Consider the following 1384-residue polypeptide: DNA-directed RNA polymerase subunit beta (1384 aa).

It belongs to the RNA polymerase beta chain family. In terms of assembly, the RNAP catalytic core consists of 2 alpha, 1 beta, 1 beta' and 1 omega subunit. When a sigma factor is associated with the core the holoenzyme is formed, which can initiate transcription.

The catalysed reaction is RNA(n) + a ribonucleoside 5'-triphosphate = RNA(n+1) + diphosphate. DNA-dependent RNA polymerase catalyzes the transcription of DNA into RNA using the four ribonucleoside triphosphates as substrates. The sequence is that of DNA-directed RNA polymerase subunit beta from Stenotrophomonas maltophilia (strain R551-3).